The sequence spans 247 residues: Chymase (247 aa).

Positions 1–19 are cleaved as a signal peptide; the sequence is MLLLPLPLLLLFLCSRAEA. The propeptide at 20-21 is activation peptide; sequence GE. Positions 22-245 constitute a Peptidase S1 domain; it reads IIGGTECKPH…YRPWINKILQ (224 aa). A disulfide bridge connects residues C51 and C67. The Charge relay system role is filled by H66. N-linked (GlcNAc...) asparagine glycosylation is found at N80 and N103. D110 serves as the catalytic Charge relay system. 2 disulfides stabilise this stretch: C144–C209 and C175–C188. S203 functions as the Charge relay system in the catalytic mechanism.

Belongs to the peptidase S1 family. Granzyme subfamily.

The protein localises to the secreted. The protein resides in the cytoplasmic granule. The catalysed reaction is Preferential cleavage: Phe-|-Xaa &gt; Tyr-|-Xaa &gt; Trp-|-Xaa &gt; Leu-|-Xaa.. In terms of biological role, major secreted protease of mast cells with suspected roles in vasoactive peptide generation, extracellular matrix degradation, and regulation of gland secretion. In Papio hamadryas (Hamadryas baboon), this protein is Chymase (CMA1).